Here is an 86-residue protein sequence, read N- to C-terminus: MDPYKVIVRPVVTEKAISMVERENKLTFIVDKRATKPDIKKAVETVYEVKVDKVNIVITMKGEKKAYVKLKPEYSASEVAARIGLF.

This sequence belongs to the universal ribosomal protein uL23 family. As to quaternary structure, part of the 50S ribosomal subunit. Contacts protein L29.

In terms of biological role, binds to 23S rRNA. One of the proteins that surrounds the polypeptide exit tunnel on the outside of the ribosome. The protein is Large ribosomal subunit protein uL23 of Thermococcus sibiricus (strain DSM 12597 / MM 739).